A 217-amino-acid polypeptide reads, in one-letter code: Uracil-DNA glycosylase (217 aa).

D62 functions as the Proton acceptor in the catalytic mechanism.

This sequence belongs to the uracil-DNA glycosylase (UDG) superfamily. UNG family.

It localises to the cytoplasm. It carries out the reaction Hydrolyzes single-stranded DNA or mismatched double-stranded DNA and polynucleotides, releasing free uracil.. Functionally, excises uracil residues from the DNA which can arise as a result of misincorporation of dUMP residues by DNA polymerase or due to deamination of cytosine. This Streptococcus gordonii (strain Challis / ATCC 35105 / BCRC 15272 / CH1 / DL1 / V288) protein is Uracil-DNA glycosylase.